Consider the following 377-residue polypeptide: Alanine dehydrogenase (377 aa).

2 residues coordinate substrate: R15 and K74. H95 serves as the catalytic Proton donor/acceptor. Residues S133, D197, R202, S219, 238–239, 266–269, and 304–307 contribute to the NAD(+) site; these read VL, VAID, and VGNM. D269 functions as the Proton donor/acceptor in the catalytic mechanism.

Belongs to the AlaDH/PNT family. In terms of assembly, homohexamer.

It catalyses the reaction L-alanine + NAD(+) + H2O = pyruvate + NH4(+) + NADH + H(+). It functions in the pathway organosulfur degradation; alkanesulfonate degradation. In terms of biological role, involved in an anaerobic respiration pathway that converts the sulfonate taurine (2-aminoethanesulfonate) to ammonia, acetate and sulfide. Acts as an alanine dehydrogenase that regenerates pyruvate, the amino group acceptor for the taurine--pyruvate aminotransferase enzyme, and liberates ammonia. In Bilophila wadsworthia (strain 3_1_6), this protein is Alanine dehydrogenase.